Reading from the N-terminus, the 573-residue chain is MASQGPLYIGFDLSTQQLKGLVVNSELKVVHISKFDFDADSRGFSIKKGVLTNEAEHEVFAPVALWLQALDGVLDGLRKQGLDFSRVRGISGAGQQHGSVYWGENAEKLLGGLDAGKTLEEQLSGAFSHPFSPNWQDASTQKECDEFDAVLGGPEQLAEATGSKAHHRFTGPQILRFQRKYPEVYKKTSRISLVSSFLASLLLGHIAPMDISDVCGMNLWNIRKGAYDEDLLKLCAGPFGMEDLKRKLGDVPEDGGLHLGKINKYYIDRYGFSSDCEILPSTGDNPATILALPLRPSDAMVSLGTSTTFLMSTPSYKPDPATHFFNHPTTPGLYMFMLCYKNGGLAREHVRDAINEKLGSPASQSWENFDRITLETPPLGQKSESDPMKLGLFFPRPEIVPNLRSGQWRFNYNPANETLTESNDGWNNPSDEARAIVESQMLSLRLRSRGLTQSPGAKIPPQPRRVYLVGGGSKNKAIAKVAGEILGGSDGVYKLDVGDNACALGAAYKAVWAMERTPGQTFEDLIGQRWREEEFIEKIADGYQKGVFEKYGNAVEGFEKMEHQVLEQEAARK.

Substrate-binding residues include histidine 97, arginine 168, aspartate 284, and asparagine 285. Residues tryptophan 366, 471–472 (GG), and asparagine 475 contribute to the ATP site.

Belongs to the FGGY kinase family.

The protein localises to the cytoplasm. The catalysed reaction is D-xylulose + ATP = D-xylulose 5-phosphate + ADP + H(+). Functionally, highly specific D-xylulose kinase which participates in the catabolism of xylose. Xylose is a major component of hemicelluloses such as xylan. Most fungi utilize D-xylose via three enzymatic reactions, xylose reductase (XR), xylitol dehydrogenase (XDH), and xylulokinase, to form xylulose 5-phosphate, which enters pentose phosphate pathway. The chain is Probable D-xylulose kinase A (xkiA) from Aspergillus clavatus (strain ATCC 1007 / CBS 513.65 / DSM 816 / NCTC 3887 / NRRL 1 / QM 1276 / 107).